We begin with the raw amino-acid sequence, 1174 residues long: HEAT repeat-containing protein 6 (1174 aa).

The HEAT 1 repeat unit spans residues Asn168–Gly207. Disordered stretches follow at residues Gly304–Lys346 and Leu373–Phe392. A compositionally biased stretch (basic residues) spans Ser323–Gly335. Positions His336–Lys346 are enriched in basic and acidic residues. 3 HEAT repeats span residues Gly460–Gln498, Ser523–Tyr560, and Gly566–Ser603. The segment at Ser619–His648 is disordered. Residues Glu631–His648 are compositionally biased toward basic and acidic residues.

In Xenopus laevis (African clawed frog), this protein is HEAT repeat-containing protein 6 (heatr6).